Consider the following 56-residue polypeptide: MTEEVCLMNFKDNEHSVTLNDLKKVKEEAIKIGIICVIITWAIFSINHHHTISAKD.

A helical transmembrane segment spans residues 30 to 52 (IKIGIICVIITWAIFSINHHHTI).

It is found in the membrane. This is an uncharacterized protein from Dictyostelium discoideum (Social amoeba).